The following is a 249-amino-acid chain: Homeobox protein TGIF2LX (249 aa).

The segment covering 1-27 (MEAAADRPAETRSRVEKDSRRAKKDSP) has biased composition (basic and acidic residues). 2 disordered regions span residues 1–60 (MEAA…KKKR) and 121–215 (QRRG…EPVS). A compositionally biased stretch (polar residues) spans 28–46 (AKTQSPAQDTSIMLRSNAD). A DNA-binding region (homeobox; TALE-type) is located at residues 55 to 118 (EHKKKRKGYL…INARRRILPD (64 aa)). The segment covering 159 to 172 (DNVQSLPLRSSPKG) has biased composition (polar residues). Positions 202-215 (VSNITSSSSPEPVS) are enriched in low complexity.

The protein belongs to the TALE/TGIF homeobox family.

It is found in the nucleus. Functionally, may have a transcription role in testis. The sequence is that of Homeobox protein TGIF2LX (TGIF2LX) from Miopithecus talapoin (Angolan talapoin).